The sequence spans 1774 residues: Kinesin-like protein KIF20B (1774 aa).

Residues Tyr-58 to Val-477 form the Kinesin motor domain. Gly-152 to Thr-159 is an ATP binding site. Ser-486 is subject to Phosphoserine. 2 coiled-coil regions span residues Glu-525 to Glu-601 and Gln-705 to Ala-747. Residues Glu-538–Ser-555 show a composition bias toward acidic residues. Disordered regions lie at residues Glu-538–Lys-557 and Glu-740–Lys-799. The span at Ser-741–Gln-778 shows a compositional bias: polar residues. Basic and acidic residues predominate over residues Thr-779–Glu-788. Positions Ser-824–Arg-946 form a coiled coil. Position 950 is a phosphoserine (Ser-950). Residues Glu-1002–Ser-1059 form a necessary and sufficient for interaction with SHTN1 region. A coiled-coil region spans residues Lys-1021–Ala-1507. Phosphoserine occurs at positions 1107 and 1542. The tract at residues Thr-1514–Lys-1774 is interaction with PIN1. Thr-1598 carries the post-translational modification Phosphothreonine; by CDK1. Ser-1612 is subject to Phosphoserine. The segment at Lys-1625–Ser-1663 is disordered. Positions Val-1638–Lys-1651 are enriched in basic and acidic residues. 2 positions are modified to phosphoserine: Ser-1669 and Ser-1694.

Belongs to the TRAFAC class myosin-kinesin ATPase superfamily. Kinesin family. In terms of assembly, oligomerizes (via kinesin motor domain). Associates with microtubules. Interacts (via C-terminal globular tail region) with PIN1 (via WW domain). Interacts with PRC1. Interacts with SHTN1 (via N-terminus); the interaction is direct and promotes the association of SHTN1 to microtubules in primary neurons. Associates with microtubules. In terms of processing, phosphorylated during mitosis by CDK1. As to expression, expressed in the brain (at protein level).

It is found in the nucleus. Its subcellular location is the cytoplasm. The protein resides in the cytoskeleton. It localises to the microtubule organizing center. The protein localises to the centrosome. It is found in the nucleolus. Its subcellular location is the nucleoplasm. The protein resides in the spindle. It localises to the spindle pole. The protein localises to the midbody. It is found in the cell projection. Its subcellular location is the axon. The protein resides in the growth cone. Functionally, plus-end-directed motor enzyme that is required for completion of cytokinesis. Required for proper midbody organization and abscission in polarized cortical stem cells. Plays a role in the regulation of neuronal polarization by mediating the transport of specific cargos. Participates in the mobilization of SHTN1 and in the accumulation of PIP3 in the growth cone of primary hippocampal neurons in a tubulin and actin-dependent manner. In the developing telencephalon, cooperates with SHTN1 to promote both the transition from the multipolar to the bipolar stage and the radial migration of cortical neurons from the ventricular zone toward the superficial layer of the neocortex. Involved in cerebral cortex growth. Acts as an oncogene for promoting bladder cancer cells proliferation, apoptosis inhibition and carcinogenic progression. This is Kinesin-like protein KIF20B from Mus musculus (Mouse).